Here is a 249-residue protein sequence, read N- to C-terminus: DNA polymerase sliding clamp (249 aa).

Belongs to the PCNA family. As to quaternary structure, the subunits circularize to form a toroid; DNA passes through its center. Replication factor C (RFC) is required to load the toroid on the DNA. Homotrimer. Interacts with NucS.

In terms of biological role, sliding clamp subunit that acts as a moving platform for DNA processing. Responsible for tethering the catalytic subunit of DNA polymerase and other proteins to DNA during high-speed replication. Regulates activity of NucS endonuclease and prevents non-specific cleavage. The polypeptide is DNA polymerase sliding clamp (Pyrococcus abyssi (strain GE5 / Orsay)).